Reading from the N-terminus, the 289-residue chain is Pseudouridine-5'-phosphate glycosidase (289 aa).

E10 functions as the Proton donor in the catalytic mechanism. K71 and V91 together coordinate substrate. D121 lines the Mn(2+) pocket. Substrate is bound at residue 123 to 125 (SQD). K142 serves as the catalytic Nucleophile.

It belongs to the pseudouridine-5'-phosphate glycosidase family. In terms of assembly, homotrimer. Mn(2+) is required as a cofactor.

The enzyme catalyses D-ribose 5-phosphate + uracil = psi-UMP + H2O. In terms of biological role, catalyzes the reversible cleavage of pseudouridine 5'-phosphate (PsiMP) to ribose 5-phosphate and uracil. Functions biologically in the cleavage direction, as part of a pseudouridine degradation pathway. This Kosmotoga olearia (strain ATCC BAA-1733 / DSM 21960 / TBF 19.5.1) protein is Pseudouridine-5'-phosphate glycosidase.